The chain runs to 400 residues: MGIFLAVPEIIAASIAGGAEALSIAGSGAAIATGEGLAALGGITEGAALLGETIPISEAATTVLTKVPELVQATQAVTAAVQGGAGLVGGIYTALASDHPGDLPPNTPTGSASGLHPTSGYNPQGAGLNLQSVHKPIHAPYSGMALVPIPEYQLETGIPGIPDWLFNLVASYLPELPSLQDVFNRIAFGIWSSYYNAGSTVVNRVLSDEIQRLLRDLEYGFRATLASIGESDPVNAIATQVRSLATTARERELLQITAGQPLDLSRPTSALSAAAGALTEAAYNFIYDASSLPKDGFNALSEGVHRLGQWISFSGPTGGTPHYATPDWILYVLEQLNADTYKIPTQAVKRKQDELHPVSPTKKANKAKKSSSPGTNSGNRSKKRRGRSTSRSTTVRRNRI.

The N-myristoyl glycine; by host moiety is linked to residue G2. The segment at 99–118 is disordered; it reads HPGDLPPNTPTGSASGLHPT. The interval 307–342 is D1; sequence LGQWISFSGPTGGTPHYATPDWILYVLEQLNADTYK. The tract at residues 347–394 is DNA-binding; the sequence is AVKRKQDELHPVSPTKKANKAKKSSSPGTNSGNRSKKRRGRSTSRSTT. The disordered stretch occupies residues 348 to 400; that stretch reads VKRKQDELHPVSPTKKANKAKKSSSPGTNSGNRSKKRRGRSTSRSTTVRRNRI. The Nuclear localization signal motif lies at 359-369; it reads SPTKKANKAKK. Residues 370-379 are compositionally biased toward low complexity; that stretch reads SSSPGTNSGN. Positions 380 to 400 are enriched in basic residues; the sequence is RSKKRRGRSTSRSTTVRRNRI.

This sequence belongs to the polyomaviruses capsid protein VP2 family. As to quaternary structure, forms homooligomers, and heterooligomers with VP3 in the endoplasmic reticulum membrane. Interacts (via D1 domain) with VP1. Interacts (via D1 domain) with VP1.

The protein localises to the virion. Its subcellular location is the host nucleus. It is found in the host endoplasmic reticulum. The protein resides in the host endoplasmic reticulum membrane. Functionally, isoform VP2 is a structural protein that resides within the core of the capsid surrounded by 72 VP1 pentamers. Participates in host cell receptor binding together with VP1. Following virus endocytosis and trafficking to the endoplasmic reticulum, VP2 and VP3 form oligomers and integrate into the endoplasmic reticulum membrane. Heterooligomer VP2-VP3 may create a viroporin for transporting the viral genome across the endoplasmic reticulum membrane to the cytoplasm. Nuclear entry of the viral DNA involves the selective exposure and importin recognition of VP2 or VP3 nuclear localization signal (shared C-terminus). Plays a role in virion assembly within the nucleus in particular through a DNA-binding domain located in the C-terminal region. An N-terminal myristoylation suggests a scaffold function for virion assembly. In terms of biological role, structural protein that resides within the core of the capsid surrounded by 72 VP1 pentamers. Following virus endocytosis and trafficking to the endoplasmic reticulum, VP2 and VP3 form oligomers and integrate into the endoplasmic reticulum membrane. Heterooligomer VP2-VP3 may create a viroporin for transporting the viral genome across the endoplasmic reticulum membrane to the cytoplasm. Nuclear entry of the viral DNA involves the selective exposure and importin recognition of VP2 or VP3 nuclear localization signal (shared C-terminus). Plays a role in virion assembly within the nucleus. In KI polyomavirus (isolate Stockholm 380) (KIPyV), this protein is Minor capsid protein VP2.